We begin with the raw amino-acid sequence, 382 residues long: uncharacterized protein (382 aa).

The next 12 helical transmembrane spans lie at 14–34 (GLLLLTLAIAVLNTLVPLWLA), 45–65 (VVSSSYFTGNLVGTLLTGYVI), 79–99 (FIFAAGCAGLGLMIGFWSWLA), 102–122 (FVAGVGCAMIWVVVESALMCS), 131–151 (LLAAYMMVYYVGTFLGQLLVS), 157–177 (LMSVLPWVTGLTLAGILPLLF), 204–224 (LGVNGCIISGIVLGSLYGLMP), 235–255 (ASIGFWMAVLVSAGILGQWPI), 270–290 (VQVFVVILGSIAMLSQAAMAP), 291–311 (ALFILGAAGFTLYPVAMAWAC), 325–345 (ALLLSYTVGSLLGPSFTAMLM), and 348–368 (FSDNLLFIMIASVSFIYLLML).

It belongs to the major facilitator superfamily. YcaD (TC 2.A.1.26) family.

The protein resides in the cell inner membrane. This is an uncharacterized protein from Shigella sonnei (strain Ss046).